Consider the following 508-residue polypeptide: MILVLDFGSQYTQLIARRLRESGIYAEIVPFFESIENIQKKAPKGLILSGGPASVYAKDAYKPSEKIFDLNVPILGICYGMQYLVDFFGGVVAGANEQEFGKAVLEITQDSVIFEGVKTKSLVWMSHMDKVIELPKGFITLAKSPNSPHCAIENGKIFGLQFHPEVIQSEEGGKILENFALLVCDCEKTWGMQHFAQREIARLKEKIANDKVLCAVSGGVDSTVVATLLYRAIKDNLIAVFVDHGLLRKNEKERVQAMFKDLQIPLNTIDAKGIFLSKLKGVSEPELKRKIIGETFIEVFEKEAKKHHLKGKIEFLAQGTLYPDVIESVSVKGPSKVIKTHHNVGGLPEWMDFKLIEPLRELFKDEARLLGKELGISQDFLMRHPFPGPGLAVRILGEVSESKIKRLQEADFIFIEELKKANLYDKVWQAFCVLLNVNSVGVMGDNRTYENAICLRAVNASDGMTASFSFLEHSFLEKVSNRITNEVSGINRVVYDITSKPPGTIEWE.

The Glutamine amidotransferase type-1 domain maps to 1-189 (MILVLDFGSQ…ALLVCDCEKT (189 aa)). Cys-78 (nucleophile) is an active-site residue. Residues His-163 and Glu-165 contribute to the active site. A GMPS ATP-PPase domain is found at 190-383 (WGMQHFAQRE…LGISQDFLMR (194 aa)). 217–223 (SGGVDST) serves as a coordination point for ATP.

As to quaternary structure, homodimer.

The catalysed reaction is XMP + L-glutamine + ATP + H2O = GMP + L-glutamate + AMP + diphosphate + 2 H(+). It participates in purine metabolism; GMP biosynthesis; GMP from XMP (L-Gln route): step 1/1. Functionally, catalyzes the synthesis of GMP from XMP. This is GMP synthase [glutamine-hydrolyzing] from Helicobacter pylori (strain HPAG1).